A 620-amino-acid polypeptide reads, in one-letter code: Glutathione-regulated potassium-efflux system protein KefC (620 aa).

Transmembrane regions (helical) follow at residues 4 to 24 (HTLIQALIYLGSAALIVPIAV), 26 to 46 (LGLGSVLGYLIAGCIIGPWGL), 54 to 74 (SILHFAEIGVVLMLFIIGLEL), 90 to 110 (GALQMVICGGLLGLFCMLLGL), 114 to 134 (VAELIGMTLALSSTAIAMQAM), 149 to 169 (FAVLLFQDIAAIPLVAMIPLL), 178 to 198 (MGAFVLSALKVAGALVLVVLL), 218 to 238 (VFSAVALFLVFGFGLLLEEVG), 270 to 290 (GLLLGLFFIGVGMSIDFGTLL), 294 to 314 (LRIVILLLGFLIIKIAMLWLI), 327 to 347 (WFAVLLGQGSEFAFVVFGAAQ), and 359 to 379 (SLTLAVALSMAATPILLVILN). In terms of domain architecture, RCK N-terminal spans 399 to 518 (QPRVIIAGFG…AGVEKPERET (120 aa)). The interval 597–620 (GWQGTEEGKHTGNMADEPETKPSS) is disordered.

The protein belongs to the monovalent cation:proton antiporter 2 (CPA2) transporter (TC 2.A.37) family. KefC subfamily. Homodimer. Interacts with the regulatory subunit KefF.

The protein resides in the cell inner membrane. Its function is as follows. Pore-forming subunit of a potassium efflux system that confers protection against electrophiles. Catalyzes K(+)/H(+) antiport. The chain is Glutathione-regulated potassium-efflux system protein KefC from Escherichia coli O127:H6 (strain E2348/69 / EPEC).